A 374-amino-acid polypeptide reads, in one-letter code: Ribosomal RNA large subunit methyltransferase G (374 aa).

This sequence belongs to the methyltransferase superfamily. RlmG family.

It is found in the cytoplasm. It carries out the reaction guanosine(1835) in 23S rRNA + S-adenosyl-L-methionine = N(2)-methylguanosine(1835) in 23S rRNA + S-adenosyl-L-homocysteine + H(+). In terms of biological role, specifically methylates the guanine in position 1835 (m2G1835) of 23S rRNA. The protein is Ribosomal RNA large subunit methyltransferase G of Pseudomonas fluorescens (strain Pf0-1).